We begin with the raw amino-acid sequence, 334 residues long: N-acetyl-gamma-glutamyl-phosphate reductase (334 aa).

Residue C154 is part of the active site.

Belongs to the NAGSA dehydrogenase family. Type 1 subfamily.

It localises to the cytoplasm. The enzyme catalyses N-acetyl-L-glutamate 5-semialdehyde + phosphate + NADP(+) = N-acetyl-L-glutamyl 5-phosphate + NADPH + H(+). The protein operates within amino-acid biosynthesis; L-arginine biosynthesis; N(2)-acetyl-L-ornithine from L-glutamate: step 3/4. Catalyzes the NADPH-dependent reduction of N-acetyl-5-glutamyl phosphate to yield N-acetyl-L-glutamate 5-semialdehyde. This is N-acetyl-gamma-glutamyl-phosphate reductase from Vibrio vulnificus (strain YJ016).